Reading from the N-terminus, the 234-residue chain is Leucyl/phenylalanyl-tRNA--protein transferase (234 aa).

It belongs to the L/F-transferase family.

Its subcellular location is the cytoplasm. The enzyme catalyses N-terminal L-lysyl-[protein] + L-leucyl-tRNA(Leu) = N-terminal L-leucyl-L-lysyl-[protein] + tRNA(Leu) + H(+). It carries out the reaction N-terminal L-arginyl-[protein] + L-leucyl-tRNA(Leu) = N-terminal L-leucyl-L-arginyl-[protein] + tRNA(Leu) + H(+). The catalysed reaction is L-phenylalanyl-tRNA(Phe) + an N-terminal L-alpha-aminoacyl-[protein] = an N-terminal L-phenylalanyl-L-alpha-aminoacyl-[protein] + tRNA(Phe). Functions in the N-end rule pathway of protein degradation where it conjugates Leu, Phe and, less efficiently, Met from aminoacyl-tRNAs to the N-termini of proteins containing an N-terminal arginine or lysine. In Enterobacter sp. (strain 638), this protein is Leucyl/phenylalanyl-tRNA--protein transferase.